We begin with the raw amino-acid sequence, 72 residues long: Large ribosomal subunit protein bL31 (72 aa).

This sequence belongs to the bacterial ribosomal protein bL31 family. Type A subfamily. Part of the 50S ribosomal subunit.

Its function is as follows. Binds the 23S rRNA. The chain is Large ribosomal subunit protein bL31 from Rhodospirillum rubrum (strain ATCC 11170 / ATH 1.1.1 / DSM 467 / LMG 4362 / NCIMB 8255 / S1).